Here is a 358-residue protein sequence, read N- to C-terminus: Ornithine cyclodeaminase (358 aa).

Residues arginine 52 and lysine 76 each coordinate L-ornithine. NAD(+) is bound by residues threonine 91, arginine 119, 146-147 (AQ), aspartate 168, threonine 208, 231-234 (VGGD), lysine 238, and serine 299. L-ornithine is bound at residue arginine 119. Aspartate 234 is a binding site for L-ornithine. Aspartate 234 acts as the Proton donor/acceptor in catalysis. Valine 300 is an L-ornithine binding site.

It belongs to the ornithine cyclodeaminase/mu-crystallin family. NAD(+) is required as a cofactor.

It catalyses the reaction L-ornithine = L-proline + NH4(+). Its pathway is amino-acid biosynthesis; L-proline biosynthesis; L-proline from L-ornithine: step 1/1. Its function is as follows. Catalyzes the conversion of L-ornithine into L-proline with release of ammonia. The chain is Ornithine cyclodeaminase from Brucella suis biovar 1 (strain 1330).